A 316-amino-acid chain; its full sequence is Alkaline ceramidase YPC1 (316 aa).

The Lumenal portion of the chain corresponds to 1–36 (MGIFRWNYPESSVPGVWGETTSTIDWCEENYVVSPY). C27 and C219 are oxidised to a cystine. An intramembrane segment occupies 37–57 (IAEWSNTLTNSVFILSAIYTT). The Lumenal segment spans residues 58 to 68 (YSAYKNKLEKR). An intramembrane segment occupies 69–89 (FLLIGFGYGLVGVGSWLFHMT). Topologically, residues 90–93 (LKYR) are lumenal. A helical transmembrane segment spans residues 94–114 (FQLLDELPMIYAMCIPTWSLV). Over 115–135 (CEAKEALLNGDNHKKVPLFEQ) the chain is Cytoplasmic. The chain crosses the membrane as a helical span at residues 136 to 156 (IFIGVIIGLAVTTASILYVIY). The Lumenal portion of the chain corresponds to 157–160 (KNVD). The stretch at 161-181 (IHQILFGVQIVVVAATAGSLT) is an intramembrane region. Residues 182–195 (YRYVHDPLAKRNLK) lie on the Lumenal side of the membrane. The stretch at 196–216 (ASMALGAILFLSGYISWLLDI) is an intramembrane region. Residues 217-228 (HYCSFWVHVRRS) lie on the Lumenal side of the membrane. A helical transmembrane segment spans residues 229–249 (ILALPLGVLLEPHGWWHILTG). The Cytoplasmic segment spans residues 250 to 316 (MGIYFYIVSL…DQSIEVKKEK (67 aa)).

This sequence belongs to the alkaline ceramidase family.

The protein resides in the endoplasmic reticulum membrane. It carries out the reaction N-hexanoyl-sphinganine + H2O = hexanoate + sphinganine. It catalyses the reaction sphinganine + hexadecanoate = N-hexadecanoylsphinganine + H2O. The enzyme catalyses N-hexadecanoyl-(4R)-hydroxysphinganine + H2O = (4R)-hydroxysphinganine + hexadecanoate. The catalysed reaction is N-hexadecanoylsphing-4-enine + H2O = sphing-4-enine + hexadecanoate. It carries out the reaction an N-acyl-(4R)-4-hydroxysphinganine + H2O = (4R)-hydroxysphinganine + a fatty acid. Its function is as follows. Alkaline ceramidase that hydrolyzes phytoceramide and also dihydroceramide into phytosphingosine or dihydrosphingosine. Prefers phytoceramide. Also has reverse activity as acyl-CoA-independent ceramide synthase, catalyzing synthesis of phytoceramide and dihydroceramide from palmitic acid and phytosphingosine or dihydrosphingosine. Is not responsible for the breakdown of unsaturated ceramide. Preferentially uses very long chain fatty acids (C-24 and C-26) in vivo compared to C-16 in vitro. This Saccharomyces cerevisiae (strain ATCC 204508 / S288c) (Baker's yeast) protein is Alkaline ceramidase YPC1 (YPC1).